A 291-amino-acid chain; its full sequence is G1/S-specific cyclin-D2 (291 aa).

Residues 261 to 291 form a disordered region; sequence TRQQTQQRNSSKSVDELDQASTPTDVQDINL. Residues 279-291 show a composition bias toward polar residues; the sequence is QASTPTDVQDINL. Position 282 is a phosphothreonine (threonine 282).

The protein belongs to the cyclin family. Cyclin D subfamily. In terms of assembly, interacts with the cdk4 and cdk6 protein kinases to form a serine/threonine kinase holoenzyme complex. The cyclin subunit imparts substrate specificity to the complex. In terms of processing, phosphorylation at Thr-282 by MAP kinases is required for ubiquitination and degradation by the DCX(AMBRA1) complex. Post-translationally, ubiquitinated by the DCX(AMBRA1) complex during the transition from G1 to S cell phase, leading to its degradation: ubiquitination is dependent on Thr-282 phosphorylation. The DCX(AMBRA1) complex represents the major regulator of CCND2 stability during the G1/S transition.

The protein localises to the nucleus. The protein resides in the cytoplasm. Its subcellular location is the nucleus membrane. Functionally, regulatory component of the cyclin D2-CDK4 (DC) complex that phosphorylates and inhibits members of the retinoblastoma (RB) protein family including RB1 and regulates the cell-cycle during G(1)/S transition. Phosphorylation of RB1 allows dissociation of the transcription factor E2F from the RB/E2F complex and the subsequent transcription of E2F target genes which are responsible for the progression through the G(1) phase. Hypophosphorylates RB1 in early G(1) phase. Cyclin D-CDK4 complexes are major integrators of various mitogenenic and antimitogenic signals. This is G1/S-specific cyclin-D2 (ccnd2) from Xenopus laevis (African clawed frog).